The sequence spans 122 residues: Large ribosomal subunit protein uL14 (122 aa).

The protein belongs to the universal ribosomal protein uL14 family. As to quaternary structure, part of the 50S ribosomal subunit. Forms a cluster with proteins L3 and L19. In the 70S ribosome, L14 and L19 interact and together make contacts with the 16S rRNA in bridges B5 and B8.

Binds to 23S rRNA. Forms part of two intersubunit bridges in the 70S ribosome. The polypeptide is Large ribosomal subunit protein uL14 (Rhizobium johnstonii (strain DSM 114642 / LMG 32736 / 3841) (Rhizobium leguminosarum bv. viciae)).